A 139-amino-acid chain; its full sequence is MPRGVYLGFDFGYKRIGVAVGQRLTCSASPLSTIEAKAGIPDWNTIQKVITQWNPQALIVGLPTCIDDRELYTTSAARRFAKQLHKRFSLPVHLVDERLSTVEARGYLFEQGGYRQIKKAEVDSIAACVILEQWLQQSE.

The protein belongs to the YqgF nuclease family.

It is found in the cytoplasm. Its function is as follows. Could be a nuclease involved in processing of the 5'-end of pre-16S rRNA. In Legionella pneumophila subsp. pneumophila (strain Philadelphia 1 / ATCC 33152 / DSM 7513), this protein is Putative pre-16S rRNA nuclease.